A 649-amino-acid polypeptide reads, in one-letter code: Endoplasmic reticulum membrane protein 65 (649 aa).

The tract at residues 1 to 55 (MGSNTSPGQADPLESENESSLTSRFLPNKRDGGKDNESVIPEKEEPDLNEPVLAV) is disordered. Residues 1–165 (MGSNTSPGQA…LATPYAIEKT (165 aa)) are Cytoplasmic-facing. The span at 28–43 (NKRDGGKDNESVIPEK) shows a compositional bias: basic and acidic residues. A Phosphoserine modification is found at serine 94. Residues 166-186 (FLFGWFVSVDSFLYIFTLFPI) form a helical membrane-spanning segment. Residues 187-302 (RVLISFFTLS…NFWNPAGWMT (116 aa)) lie on the Lumenal side of the membrane. N-linked (GlcNAc...) asparagine glycosylation is present at asparagine 215. Residues 303–323 (FFYYFAISLAYMVLHTLVLLY) traverse the membrane as a helical segment. The Cytoplasmic segment spans residues 324–366 (QIITLNVTVNSYSNAVLALLMSNQLVEIKGAVFKKFEKENLFQ). The chain crosses the membrane as a helical span at residues 367–387 (LTCSDVVERFQITIMVIIIFL). The Lumenal portion of the chain corresponds to 388–414 (RNLAELYTTSSLDQPLLTFKRLKTLLA). The helical transmembrane segment at 415 to 435 (PFFWVIGSELFVDWLKHAFII) threads the bilayer. Topologically, residues 436–479 (KFNYIKPSIYSRFTDVLCHDYVASGAQLTQTVTGCSQQVARRMG) are cytoplasmic. A helical membrane pass occupies residues 480–500 (LPVLPLVCVFIRTSMQTWSMF). At 501–557 (RSTHSMKQEIAKSIGTIFPTKDNYVYYLPNKEANTYNAGKEASWETLLLSVVRGKSG) the chain is on the lumenal side. Residues 558–578 (IAFLFFMAIMLKLLLGKAILA) form a helical membrane-spanning segment. Residues 579-649 (ITQSRYESMQ…RYAMHSKRIW (71 aa)) are Cytoplasmic-facing.

The protein belongs to the TAPT1 family. As to quaternary structure, interacts with slp1.

Its subcellular location is the endoplasmic reticulum membrane. Functionally, may be involved in membrane protein folding. In Schizosaccharomyces pombe (strain 972 / ATCC 24843) (Fission yeast), this protein is Endoplasmic reticulum membrane protein 65.